Here is a 472-residue protein sequence, read N- to C-terminus: Eukaryotic translation initiation factor 2 subunit 3 (472 aa).

A2 carries the N-acetylalanine; partial modification. The tr-type G domain maps to 39-247; sequence QATINIGTIG…YIVKKIPVPL (209 aa). The tract at residues 48 to 55 is G1; sequence GHVAHGKS. 51-56 provides a ligand contact to GTP; the sequence is AHGKST. Residues 76 to 80 are G2; that stretch reads NITIK. The interval 134 to 137 is G3; it reads DCPG. Residues 190 to 193 and 225 to 227 each bind GTP; these read NKID and SAQ. The G4 stretch occupies residues 190-193; that stretch reads NKID. Positions 225–227 are G5; sequence SAQ. The tract at residues 457-469 is interacts with CDC123; it reads GQIRRGVTIKPTV.

Belongs to the TRAFAC class translation factor GTPase superfamily. Classic translation factor GTPase family. EIF2G subfamily. In terms of assembly, eukaryotic translation initiation factor 2 eIF2 is a heterotrimeric complex composed of an alpha (EIF2S1), a beta (EIF2S2) and a gamma (EIF2S3) chain. eIF2 is member of the 43S pre-initiation complex (43S PIC).

The protein localises to the cytoplasm. It is found in the cytosol. The enzyme catalyses GTP + H2O = GDP + phosphate + H(+). Functionally, member of the eIF2 complex that functions in the early steps of protein synthesis by forming a ternary complex with GTP and initiator tRNA. This complex binds to a 40S ribosomal subunit, followed by mRNA binding to form the 43S pre-initiation complex (43S PIC). Junction of the 60S ribosomal subunit to form the 80S initiation complex is preceded by hydrolysis of the GTP bound to eIF2 and release of an eIF2-GDP binary complex. In order for eIF2 to recycle and catalyze another round of initiation, the GDP bound to eIF2 must exchange with GTP by way of a reaction catalyzed by eIF-2B. The protein is Eukaryotic translation initiation factor 2 subunit 3 (EIF2S3) of Gallus gallus (Chicken).